A 115-amino-acid chain; its full sequence is Large ribosomal subunit protein bL21 (115 aa).

This sequence belongs to the bacterial ribosomal protein bL21 family. As to quaternary structure, part of the 50S ribosomal subunit. Contacts protein L20.

Its function is as follows. This protein binds to 23S rRNA in the presence of protein L20. The polypeptide is Large ribosomal subunit protein bL21 (Picosynechococcus sp. (strain ATCC 27264 / PCC 7002 / PR-6) (Agmenellum quadruplicatum)).